Here is a 319-residue protein sequence, read N- to C-terminus: ATP-dependent 6-phosphofructokinase (319 aa).

Residue Gly-11 participates in ATP binding. Arg-21 to Arg-25 is a binding site for ADP. ATP is bound by residues Arg-72–Cys-73 and Gly-102–Ser-105. Asp-103 is a Mg(2+) binding site. Residue Thr-125–Asp-127 coordinates substrate. Asp-127 acts as the Proton acceptor in catalysis. Arg-154 lines the ADP pocket. Residues Arg-162 and Met-169 to Arg-171 contribute to the substrate site. Residues Gly-185 to Glu-187, Arg-211, and Lys-213 to His-215 contribute to the ADP site. Substrate is bound by residues Glu-222, Arg-243, and His-249 to Arg-252.

Belongs to the phosphofructokinase type A (PFKA) family. ATP-dependent PFK group I subfamily. Prokaryotic clade 'B1' sub-subfamily. Homotetramer. Requires Mg(2+) as cofactor.

The protein resides in the cytoplasm. It carries out the reaction beta-D-fructose 6-phosphate + ATP = beta-D-fructose 1,6-bisphosphate + ADP + H(+). It participates in carbohydrate degradation; glycolysis; D-glyceraldehyde 3-phosphate and glycerone phosphate from D-glucose: step 3/4. With respect to regulation, allosterically activated by ADP and other diphosphonucleosides, and allosterically inhibited by phosphoenolpyruvate. In terms of biological role, catalyzes the phosphorylation of D-fructose 6-phosphate to fructose 1,6-bisphosphate by ATP, the first committing step of glycolysis. The chain is ATP-dependent 6-phosphofructokinase from Clostridium novyi (strain NT).